Reading from the N-terminus, the 201-residue chain is Peptidyl-prolyl cis-trans isomerase FKBP11 (201 aa).

An N-terminal signal peptide occupies residues 1-27 (MTLSPLLLPLQLLLLLLFSGAVCRAEA). A PPIase FKBP-type domain is found at 57–144 (GDTLHIHYTG…QYDVELIALI (88 aa)). Residues 156–176 (ILPLVGIAMVPALLGLIGYHL) traverse the membrane as a helical segment.

This sequence belongs to the FKBP-type PPIase family. As to quaternary structure, interacts with IFITM5.

It is found in the membrane. The enzyme catalyses [protein]-peptidylproline (omega=180) = [protein]-peptidylproline (omega=0). Functionally, PPIases accelerate the folding of proteins during protein synthesis. This Mus musculus (Mouse) protein is Peptidyl-prolyl cis-trans isomerase FKBP11 (Fkbp11).